The chain runs to 227 residues: Enolase-phosphatase E1 (227 aa).

Residues Asp-11 and Glu-13 each coordinate Mg(2+). Substrate is bound by residues 118-119 and Lys-161; that span reads SS. Position 186 (Asp-186) interacts with Mg(2+).

It belongs to the HAD-like hydrolase superfamily. MasA/MtnC family. As to quaternary structure, monomer. Requires Mg(2+) as cofactor.

It is found in the cytoplasm. Its subcellular location is the nucleus. It catalyses the reaction 5-methylsulfanyl-2,3-dioxopentyl phosphate + H2O = 1,2-dihydroxy-5-(methylsulfanyl)pent-1-en-3-one + phosphate. Its pathway is amino-acid biosynthesis; L-methionine biosynthesis via salvage pathway; L-methionine from S-methyl-5-thio-alpha-D-ribose 1-phosphate: step 3/6. The protein operates within amino-acid biosynthesis; L-methionine biosynthesis via salvage pathway; L-methionine from S-methyl-5-thio-alpha-D-ribose 1-phosphate: step 4/6. Its function is as follows. Bifunctional enzyme that catalyzes the enolization of 2,3-diketo-5-methylthiopentyl-1-phosphate (DK-MTP-1-P) into the intermediate 2-hydroxy-3-keto-5-methylthiopentenyl-1-phosphate (HK-MTPenyl-1-P), which is then dephosphorylated to form the acireductone 1,2-dihydroxy-3-keto-5-methylthiopentene (DHK-MTPene). This is Enolase-phosphatase E1 from Saccharomyces cerevisiae (strain JAY291) (Baker's yeast).